The sequence spans 378 residues: Formate dehydrogenase 2, mitochondrial (378 aa).

Residues 1-18 (MAMWRAPSAAGQLLGRAL) constitute a mitochondrion transit peptide. Positions 122 and 146 each coordinate substrate. Residues threonine 147, 201–202 (RI), aspartate 221, 256–260 (PLTEK), asparagine 282, aspartate 308, and 332–335 (HCSG) contribute to the NAD(+) site.

The protein belongs to the D-isomer specific 2-hydroxyacid dehydrogenase family. FDH subfamily. In terms of assembly, homodimer.

The protein resides in the mitochondrion. The enzyme catalyses formate + NAD(+) = CO2 + NADH. In terms of biological role, catalyzes the NAD(+)-dependent oxidation of formate to carbon dioxide. Involved in the cell stress response. In Oryza sativa subsp. japonica (Rice), this protein is Formate dehydrogenase 2, mitochondrial.